Here is a 123-residue protein sequence, read N- to C-terminus: Holo-[acyl-carrier-protein] synthase (123 aa).

Asp8 and Glu60 together coordinate Mg(2+).

It belongs to the P-Pant transferase superfamily. AcpS family. Mg(2+) serves as cofactor.

It is found in the cytoplasm. It catalyses the reaction apo-[ACP] + CoA = holo-[ACP] + adenosine 3',5'-bisphosphate + H(+). In terms of biological role, transfers the 4'-phosphopantetheine moiety from coenzyme A to a Ser of acyl-carrier-protein. This Wolbachia pipientis wMel protein is Holo-[acyl-carrier-protein] synthase.